The primary structure comprises 211 residues: Orotate phosphoribosyltransferase (211 aa).

5-phospho-alpha-D-ribose 1-diphosphate is bound by residues R103, K107, H109, and 129–137 (EDLISTGKS). Residue S133 participates in orotate binding.

The protein belongs to the purine/pyrimidine phosphoribosyltransferase family. PyrE subfamily. As to quaternary structure, homodimer. It depends on Mg(2+) as a cofactor.

It catalyses the reaction orotidine 5'-phosphate + diphosphate = orotate + 5-phospho-alpha-D-ribose 1-diphosphate. It participates in pyrimidine metabolism; UMP biosynthesis via de novo pathway; UMP from orotate: step 1/2. Catalyzes the transfer of a ribosyl phosphate group from 5-phosphoribose 1-diphosphate to orotate, leading to the formation of orotidine monophosphate (OMP). The sequence is that of Orotate phosphoribosyltransferase from Fusobacterium nucleatum subsp. nucleatum (strain ATCC 25586 / DSM 15643 / BCRC 10681 / CIP 101130 / JCM 8532 / KCTC 2640 / LMG 13131 / VPI 4355).